The primary structure comprises 209 residues: Uracil phosphoribosyltransferase (209 aa).

5-phospho-alpha-D-ribose 1-diphosphate contacts are provided by residues Arg-79, Arg-104, and 131-139; that span reads DPMLATGGS. Uracil-binding positions include Ile-194 and 199–201; that span reads GDA. Residue Asp-200 participates in 5-phospho-alpha-D-ribose 1-diphosphate binding.

The protein belongs to the UPRTase family. Mg(2+) is required as a cofactor.

It catalyses the reaction UMP + diphosphate = 5-phospho-alpha-D-ribose 1-diphosphate + uracil. It participates in pyrimidine metabolism; UMP biosynthesis via salvage pathway; UMP from uracil: step 1/1. Its activity is regulated as follows. Allosterically activated by GTP. Its function is as follows. Catalyzes the conversion of uracil and 5-phospho-alpha-D-ribose 1-diphosphate (PRPP) to UMP and diphosphate. This chain is Uracil phosphoribosyltransferase, found in Streptococcus pneumoniae serotype 4 (strain ATCC BAA-334 / TIGR4).